The following is a 273-amino-acid chain: MEAAPSRFMFLLFLLTCELAAEVAAEVEKSSDGPGAAQEPTWLTDVPAAMEFIAATEVAVIGFFQDLEIPAVPILHSMVQKFPGVSFGISTDSEVLTHYNITGNTICLFRLVDNEQLNLEDEDIESIDATKLSRFIEINSLHMVTEYNPVTVIGLFNSVIQIHLLLIMNKASPEYEENMHRYQKAAKLFQGKILFILVDSGMKENGKVISFFKLKESQLPALAIYQTLDDEWDTLPTAEVSVEHVQNFCDGFLSGKLLKENRESEGKTPKVEL.

A signal peptide spans 1 to 25; the sequence is MEAAPSRFMFLLFLLTCELAAEVAA. Residues 39–152 form the Thioredoxin domain; that stretch reads EPTWLTDVPA…MVTEYNPVTV (114 aa). Asn100 carries an N-linked (GlcNAc...) asparagine glycan. The PDIA3-binding site stretch occupies residues 230–233; it reads DEWD. Positions 270–273 match the Prevents secretion from ER motif; that stretch reads KVEL.

This sequence belongs to the protein disulfide isomerase family. Interacts with PDIA3.

The protein resides in the endoplasmic reticulum lumen. Functionally, specifically binds unfolded proteins and may recruit protein disulfide isomerase PDIA3 to unfolded substrates. Binds protein substrates via a hydrophobic pocket in the C-terminal domain. May play a role in the unfolded stress response. The chain is Endoplasmic reticulum resident protein 27 (ERP27) from Homo sapiens (Human).